A 502-amino-acid chain; its full sequence is Hexokinase-9 (502 aa).

A helical transmembrane segment spans residues 5-24 (AALASAAMAAAAVAVVSTVL). The Hexokinase domain maps to 37–488 (RAEAVLLRDL…SGVGAALLAA (452 aa)). The tract at residues 92–230 (SGGEKGMFYA…GLDMKVTALV (139 aa)) is hexokinase small subdomain. ADP contacts are provided by G106, T107, and N108. Residues T196, K197, N231, and D232 each coordinate D-glucose. The hexokinase large subdomain stretch occupies residues 231–477 (NDTVGTLAAG…PSVMIKHVND (247 aa)). T255 is an ADP binding site. N258, E286, and E317 together coordinate D-glucose. G442 provides a ligand contact to ADP.

Belongs to the hexokinase family. As to expression, expressed in roots, leaves, flowers, immature seeds, endosperm and seed coat.

The protein localises to the plastid. It is found in the chloroplast outer membrane. It carries out the reaction a D-hexose + ATP = a D-hexose 6-phosphate + ADP + H(+). The catalysed reaction is D-fructose + ATP = D-fructose 6-phosphate + ADP + H(+). It catalyses the reaction D-glucose + ATP = D-glucose 6-phosphate + ADP + H(+). The protein operates within carbohydrate metabolism; hexose metabolism. It functions in the pathway carbohydrate degradation; glycolysis; D-glyceraldehyde 3-phosphate and glycerone phosphate from D-glucose: step 1/4. Functionally, fructose and glucose phosphorylating enzyme. This Oryza sativa subsp. japonica (Rice) protein is Hexokinase-9 (HXK9).